The following is a 90-amino-acid chain: Barrier-to-autointegration factor B (90 aa).

This sequence belongs to the BAF family. As to quaternary structure, homodimer. Interacts with nemp1a and nemp1b.

Its subcellular location is the nucleus. It is found in the chromosome. The protein localises to the nucleus envelope. The protein resides in the cytoplasm. In terms of biological role, non-specific DNA-binding protein that plays key roles in mitotic nuclear reassembly, chromatin organization, DNA damage response, gene expression and intrinsic immunity against foreign DNA. Contains two non-specific double-stranded DNA (dsDNA)-binding sites which promote DNA cross-bridging. Plays a key role in nuclear membrane reformation at the end of mitosis by driving formation of a single nucleus in a spindle-independent manner. Transiently cross-bridges anaphase chromosomes via its ability to bridge distant DNA sites, leading to the formation of a dense chromatin network at the chromosome ensemble surface that limits membranes to the surface. Also acts as a negative regulator of innate immune activation by restricting CGAS activity toward self-DNA upon acute loss of nuclear membrane integrity. Outcompetes CGAS for DNA-binding, thereby preventing CGAS activation and subsequent damaging autoinflammatory responses. Also involved in DNA damage response; acts by inhibiting the ADP-ribosyltransferase activity of PARP1. Involved in the recognition of exogenous dsDNA in the cytosol: associates with exogenous dsDNA immediately after its appearance in the cytosol at endosome breakdown and is required to avoid autophagy. The polypeptide is Barrier-to-autointegration factor B (banf1-b) (Xenopus laevis (African clawed frog)).